A 763-amino-acid polypeptide reads, in one-letter code: 5-methyltetrahydropteroyltriglutamate--homocysteine methyltransferase (763 aa).

5-methyltetrahydropteroyltri-L-glutamate-binding positions include 16–19 (RELK) and K114. Residues 438–440 (IGS) and E491 each bind L-homocysteine. Residues 438 to 440 (IGS) and E491 each bind L-methionine. Residues 522-523 (RC) and W568 each bind 5-methyltetrahydropteroyltri-L-glutamate. Residue D606 coordinates L-homocysteine. Residue D606 coordinates L-methionine. E612 is a binding site for 5-methyltetrahydropteroyltri-L-glutamate. Zn(2+)-binding residues include H648, C650, and E672. H701 (proton donor) is an active-site residue. C733 serves as a coordination point for Zn(2+).

It belongs to the vitamin-B12 independent methionine synthase family. Zn(2+) is required as a cofactor.

The enzyme catalyses 5-methyltetrahydropteroyltri-L-glutamate + L-homocysteine = tetrahydropteroyltri-L-glutamate + L-methionine. It functions in the pathway amino-acid biosynthesis; L-methionine biosynthesis via de novo pathway; L-methionine from L-homocysteine (MetE route): step 1/1. Catalyzes the transfer of a methyl group from 5-methyltetrahydrofolate to homocysteine resulting in methionine formation. The chain is 5-methyltetrahydropteroyltriglutamate--homocysteine methyltransferase from Parvibaculum lavamentivorans (strain DS-1 / DSM 13023 / NCIMB 13966).